Consider the following 482-residue polypeptide: Magnesium-dependent glutamate N-prenyltransferase (482 aa).

Positions 351, 355, 359, and 366 each coordinate Mg(2+).

It belongs to the terpene synthase family. Mg(2+) serves as cofactor.

The catalysed reaction is (2E)-geranyl diphosphate + L-glutamate = N-geranyl-L-glutamate + diphosphate. It participates in secondary metabolite biosynthesis. Its function is as follows. Magnesium-dependent glutamate N-prenyltransferase: part of the gene cluster that mediates the biosynthesis of domoic acid (DA) and derivatives, natural products with neurochemical activity acting as ionotropic glutamate receptor (iGluR) agonists, thus being neurotoxins causing amnesic shellfish poisoning (ASP). Catalyzes the conversion of L-glutamic acid (L-Glu) to N-geranyl-L-glutamic acid (NGG) in the presence of geranyl diphosphate (GPP). Also able to catalyze the formation of farnesyl-L-glutamate from farnesyl diphosphate (FPP). Cannot use dimethylallyl diphosphate (DMAPP) as substrate. The chain is Magnesium-dependent glutamate N-prenyltransferase from Pseudo-nitzschia multiseries (Marine planktonic diatom).